The following is a 233-amino-acid chain: Cell number regulator 8 (233 aa).

The next 2 helical transmembrane spans lie at 85 to 101 (VCLL…GSNV) and 115 to 138 (CLPY…APWF).

The protein belongs to the cornifelin family. Expressed in roots, coleoptiles, leaves, stalks, apical meristems, immature ears, embryos, endosperm, pericarp, silks, tassel spikelets and pollen. Highest expression in the pericarp and stalks.

It is found in the membrane. This chain is Cell number regulator 8 (CNR8), found in Zea mays (Maize).